The following is a 339-amino-acid chain: 1-aminocyclopropane-1-carboxylate deaminase (339 aa).

An N6-(pyridoxal phosphate)lysine modification is found at Lys-52. Ser-79 (nucleophile) is an active-site residue.

This sequence belongs to the ACC deaminase/D-cysteine desulfhydrase family. In terms of assembly, homotrimer. It depends on pyridoxal 5'-phosphate as a cofactor.

The catalysed reaction is 1-aminocyclopropane-1-carboxylate + H2O = 2-oxobutanoate + NH4(+). Functionally, catalyzes a cyclopropane ring-opening reaction, the irreversible conversion of 1-aminocyclopropane-1-carboxylate (ACC) to ammonia and alpha-ketobutyrate. Allows growth on ACC as a nitrogen source. This Bradyrhizobium sp. (strain BTAi1 / ATCC BAA-1182) protein is 1-aminocyclopropane-1-carboxylate deaminase.